The chain runs to 367 residues: Glutamate 5-kinase (367 aa).

Lys-9 is an ATP binding site. 3 residues coordinate substrate: Ser-49, Asp-136, and Asn-148. ATP contacts are provided by residues 168-169 and 210-216; these read TD and TGGMKSK. Residues 276–350 form the PUA domain; it reads SGQIEVDAGA…GMQSQDIQVR (75 aa).

The protein belongs to the glutamate 5-kinase family.

The protein resides in the cytoplasm. It carries out the reaction L-glutamate + ATP = L-glutamyl 5-phosphate + ADP. It participates in amino-acid biosynthesis; L-proline biosynthesis; L-glutamate 5-semialdehyde from L-glutamate: step 1/2. In terms of biological role, catalyzes the transfer of a phosphate group to glutamate to form L-glutamate 5-phosphate. In Bacillus cereus (strain ATCC 14579 / DSM 31 / CCUG 7414 / JCM 2152 / NBRC 15305 / NCIMB 9373 / NCTC 2599 / NRRL B-3711), this protein is Glutamate 5-kinase.